A 458-amino-acid polypeptide reads, in one-letter code: tRNA(Ile)-lysidine synthase (458 aa).

36-41 (SGGADS) serves as a coordination point for ATP.

The protein belongs to the tRNA(Ile)-lysidine synthase family.

The protein resides in the cytoplasm. The enzyme catalyses cytidine(34) in tRNA(Ile2) + L-lysine + ATP = lysidine(34) in tRNA(Ile2) + AMP + diphosphate + H(+). Functionally, ligates lysine onto the cytidine present at position 34 of the AUA codon-specific tRNA(Ile) that contains the anticodon CAU, in an ATP-dependent manner. Cytidine is converted to lysidine, thus changing the amino acid specificity of the tRNA from methionine to isoleucine. This Protochlamydia amoebophila (strain UWE25) protein is tRNA(Ile)-lysidine synthase.